A 211-amino-acid polypeptide reads, in one-letter code: MAKVLYITAHPHDEATSYSMATGKAFIESYKEANPNDEVVHIDLYKENIPHIDADVFSGWGKLQSGTGFEELSESEKAKVGRLGELSDQFASADKYVFVTPLWNFSFPPVMKAYLDSVAVAGKSFKYTEQGPVGLLTDKKAIHIQARGGYYSEGPAAEMEMGHRYIGIMMNFFGVPSFDGIFVEGHNAEPDKAQQIKEDAIARAKEAGKTF.

17–19 (SYS) contributes to the FMN binding site.

The protein belongs to the azoreductase type 1 family. As to quaternary structure, homodimer. The cofactor is FMN.

The catalysed reaction is 2 a quinone + NADH + H(+) = 2 a 1,4-benzosemiquinone + NAD(+). The enzyme catalyses N,N-dimethyl-1,4-phenylenediamine + anthranilate + 2 NAD(+) = 2-(4-dimethylaminophenyl)diazenylbenzoate + 2 NADH + 2 H(+). Its activity is regulated as follows. Strongly inhibited by Pb(2+) and weakly inhibited by Cu(2+), Hg(2+) and Fe(2+). Stable in presence of Ag(+). In terms of biological role, quinone reductase that provides resistance to thiol-specific stress caused by electrophilic quinones. Contributes to resistance to 2-methylhydroquinone (2-MHQ) and catechol. Exhibits NADH-dependent 2,6-dichloroindophenol (DCIP) oxidoreductase activity. Also exhibits azoreductase activity. Catalyzes the reductive cleavage of the azo bond in aromatic azo compounds to the corresponding amines. Can reduce methyl red. The chain is FMN-dependent NADH:quinone oxidoreductase 2 from Bacillus subtilis (strain 168).